The chain runs to 294 residues: Glycine--tRNA ligase alpha subunit (294 aa).

The protein belongs to the class-II aminoacyl-tRNA synthetase family. As to quaternary structure, tetramer of two alpha and two beta subunits.

The protein resides in the cytoplasm. It carries out the reaction tRNA(Gly) + glycine + ATP = glycyl-tRNA(Gly) + AMP + diphosphate. This is Glycine--tRNA ligase alpha subunit from Trichormus variabilis (strain ATCC 29413 / PCC 7937) (Anabaena variabilis).